We begin with the raw amino-acid sequence, 292 residues long: Homoserine kinase (292 aa).

84–94 (PFSRGLGSSSA) is a binding site for ATP.

This sequence belongs to the GHMP kinase family. Homoserine kinase subfamily.

Its subcellular location is the cytoplasm. The enzyme catalyses L-homoserine + ATP = O-phospho-L-homoserine + ADP + H(+). It functions in the pathway amino-acid biosynthesis; L-threonine biosynthesis; L-threonine from L-aspartate: step 4/5. In terms of biological role, catalyzes the ATP-dependent phosphorylation of L-homoserine to L-homoserine phosphate. The chain is Homoserine kinase from Campylobacter hominis (strain ATCC BAA-381 / DSM 21671 / CCUG 45161 / LMG 19568 / NCTC 13146 / CH001A).